Consider the following 175-residue polypeptide: Small ribosomal subunit protein uS7 (175 aa).

This sequence belongs to the universal ribosomal protein uS7 family. As to quaternary structure, part of the 30S ribosomal subunit. Contacts proteins S9 and S11.

In terms of biological role, one of the primary rRNA binding proteins, it binds directly to 16S rRNA where it nucleates assembly of the head domain of the 30S subunit. Is located at the subunit interface close to the decoding center, probably blocks exit of the E-site tRNA. This chain is Small ribosomal subunit protein uS7, found in Legionella pneumophila (strain Paris).